The chain runs to 286 residues: Beta-lactamase TEM-12 (286 aa).

Residues 1–23 (MSIQHFRVALIPFFAAFCLPVFA) form the signal peptide. Ser-68 (acyl-ester intermediate) is an active-site residue. A disulfide bond links Cys-75 and Cys-121. Glu-166 serves as the catalytic Proton acceptor. Residue 232–234 (KSG) coordinates substrate.

The protein belongs to the class-A beta-lactamase family.

It carries out the reaction a beta-lactam + H2O = a substituted beta-amino acid. TEM-type are the most prevalent beta-lactamases in enterobacteria; they hydrolyze the beta-lactam bond in susceptible beta-lactam antibiotics, thus conferring resistance to penicillins and cephalosporins such as ceftazidime. This is Beta-lactamase TEM-12 (blaT-12b) from Klebsiella oxytoca.